A 228-amino-acid polypeptide reads, in one-letter code: Ras-related protein Rab-33B (228 aa).

8 residues coordinate GTP: asparagine 41, valine 42, glycine 43, lysine 44, threonine 45, cysteine 46, threonine 60, and threonine 63. Threonine 45 provides a ligand contact to Mg(2+). The Switch 1 motif lies at glycine 54–valine 66. Threonine 63 and aspartate 86 together coordinate Mg(2+). Residues threonine 87–histidine 106 carry the Switch 2 motif. Residues glycine 89, asparagine 146, lysine 147, aspartate 149, alanine 177, and lysine 178 each coordinate GTP. S-geranylgeranyl cysteine attachment occurs at residues cysteine 226 and cysteine 228. Cysteine 228 bears the Cysteine methyl ester mark.

This sequence belongs to the small GTPase superfamily. Rab family. In terms of assembly, interacts (GTP- and GDP-bound forms) with ATG16L1; the complex consists of a tetramer where two RAB33B molecules bind independently one molecule of the ATG16L1 homodimer; the interaction promotes ATG12-ATG5-ATG16L1 complex recruitment to phagophores. Interacts with ATG16L2; however interaction is approximately hundred times lower than for ATG16L1. Interacts with RIC1 (via C-terminus domain); the interaction is direct with a preference for RAB33B-GTP. Interacts with RGP1. Mg(2+) serves as cofactor.

The protein resides in the golgi apparatus membrane. It is found in the golgi apparatus. It localises to the cis-Golgi network. Its subcellular location is the preautophagosomal structure membrane. It catalyses the reaction GTP + H2O = GDP + phosphate + H(+). Regulated by guanine nucleotide exchange factors (GEFs) which promote the exchange of bound GDP for free GTP. Regulated by GTPase activating proteins (GAPs) such as SGSM2 which increase the GTP hydrolysis activity. Inhibited by GDP dissociation inhibitors (GDIs). In terms of biological role, the small GTPases Rab are key regulators of intracellular membrane trafficking, from the formation of transport vesicles to their fusion with membranes. Rabs cycle between an inactive GDP-bound form and an active GTP-bound form that is able to recruit to membranes different sets of downstream effectors directly responsible for vesicle formation, movement, tethering and fusion. RAB33B acts, in coordination with RAB6A, to regulate intra-Golgi retrograde trafficking. Participates in autophagosome formation by recruiting the ATG12-ATG5-ATG16L1 complex to phagophores, probably in a nucleotide-independent manner. This chain is Ras-related protein Rab-33B (RAB33B), found in Gallus gallus (Chicken).